The following is a 370-amino-acid chain: Aldo-keto reductase NECHADRAFT_45914 (370 aa).

Asp-78 lines the NADP(+) pocket. Residue Tyr-83 is the Proton donor of the active site. His-174 contributes to the substrate binding site. NADP(+) is bound by residues 204-205, Gln-230, 259-269, and 333-341; these read SS, APLASGRLARR, and STVQRIEEA.

Belongs to the aldo/keto reductase family.

It functions in the pathway secondary metabolite biosynthesis. Its function is as follows. Aldo-keto reductase; part of the gene cluster that mediates the biosynthesis of sansalvamide, a cyclic pentadepsipeptide that shows promising results as potential anti-cancer drug. The nonribosmal peptide synthetase NRPS30 produces sansalvamide by incorporating successively one phenylalanine, one leucine, one alpha-hydroxyisocaproic acid (HICA), one valine and one leucine before sansalvamide is released from by cyclization by the terminal C domain of NRPS30. The HICA residue is probably provided by reduction of alpha-ketoisocaproate by the cluster-specific aldo-keto reductase (NECHADRAFT_45914). This chain is Aldo-keto reductase NECHADRAFT_45914, found in Fusarium vanettenii (strain ATCC MYA-4622 / CBS 123669 / FGSC 9596 / NRRL 45880 / 77-13-4) (Fusarium solani subsp. pisi).